We begin with the raw amino-acid sequence, 358 residues long: Acyl-CoA Delta-12 desaturase (358 aa).

The next 2 helical transmembrane spans lie at 30 to 50 (IILY…AMFY) and 55 to 75 (TVFY…AGSH). His75, His80, His112, His115, and His116 together coordinate Fe cation. The Histidine box-1 signature appears at 75 to 80 (HRLWAH). The short motif at 112 to 116 (HRVHH) is the Histidine box-2 element. Helical transmembrane passes span 175 to 195 (TFFA…YFWG) and 200 to 220 (TAFF…TFLV). His225, His254, His257, and His258 together coordinate Fe cation. A Histidine box-3 motif is present at residues 254 to 258 (HNYHH).

This sequence belongs to the fatty acid desaturase type 1 family. Requires Fe(2+) as cofactor.

The protein localises to the membrane. It carries out the reaction (9Z)-octadecenoyl-CoA + 2 Fe(II)-[cytochrome b5] + O2 + 2 H(+) = (9Z,12Z)-octadecadienoyl-CoA + 2 Fe(III)-[cytochrome b5] + 2 H2O. It catalyses the reaction (9Z)-hexadecenoyl-CoA + 2 Fe(II)-[cytochrome b5] + O2 + 2 H(+) = (9Z,12Z)-hexadecadienoyl-CoA + 2 Fe(III)-[cytochrome b5] + 2 H2O. In terms of biological role, catalyzes the formation of a Delta12 double bond, acting on monounsaturated fatty acyl substrates like palmitoleoyl-CoA ((9Z)-hexadecenoyl-CoA) and oleoyl-CoA ((9Z)-octadecenoyl-CoA) with higher desaturation activity on (9Z)-octadecenoyl-CoA than (9Z)-hexadecenoyl-CoA. Requires preexisting cis double bond at the Delta9 position of fatty acyls to be able to insert the Delta12 double bond. Delta12-desaturation of (9Z)-octadecenoyl-CoA in insects produces (9Z,12Z)-octadecadienoyl-CoA (linoleoyl-CoA) which may be used to supply precursors of crucial mediators of immunity and reproduction and other essential functions. The protein is Acyl-CoA Delta-12 desaturase of Tribolium castaneum (Red flour beetle).